Reading from the N-terminus, the 226-residue chain is Triosephosphate isomerase (226 aa).

10 to 12 (NFK) lines the substrate pocket. Residue His-96 is the Electrophile of the active site. Glu-144 acts as the Proton acceptor in catalysis. Substrate-binding positions include Ile-149, Gly-184, and 205 to 206 (AS).

This sequence belongs to the triosephosphate isomerase family. As to quaternary structure, homotetramer; dimer of dimers.

It localises to the cytoplasm. It carries out the reaction D-glyceraldehyde 3-phosphate = dihydroxyacetone phosphate. It functions in the pathway carbohydrate biosynthesis; gluconeogenesis. The protein operates within carbohydrate degradation; glycolysis; D-glyceraldehyde 3-phosphate from glycerone phosphate: step 1/1. Its function is as follows. Involved in the gluconeogenesis. Catalyzes stereospecifically the conversion of dihydroxyacetone phosphate (DHAP) to D-glyceraldehyde-3-phosphate (G3P). This is Triosephosphate isomerase from Methanopyrus kandleri (strain AV19 / DSM 6324 / JCM 9639 / NBRC 100938).